The sequence spans 884 residues: Alanine--tRNA ligase (884 aa).

Zn(2+) contacts are provided by His565, His569, Cys675, and His679.

The protein belongs to the class-II aminoacyl-tRNA synthetase family. Zn(2+) is required as a cofactor.

It localises to the cytoplasm. The catalysed reaction is tRNA(Ala) + L-alanine + ATP = L-alanyl-tRNA(Ala) + AMP + diphosphate. Catalyzes the attachment of alanine to tRNA(Ala) in a two-step reaction: alanine is first activated by ATP to form Ala-AMP and then transferred to the acceptor end of tRNA(Ala). Also edits incorrectly charged Ser-tRNA(Ala) and Gly-tRNA(Ala) via its editing domain. This is Alanine--tRNA ligase from Maricaulis maris (strain MCS10) (Caulobacter maris).